A 562-amino-acid chain; its full sequence is Furostanol glycoside 26-O-beta-glucosidase (562 aa).

A chloroplast-targeting transit peptide spans 1 to 44 (MAAQLGLPLVSCHRGASQAASSSAHLVPGASAIMQAGNRRQKMR). A beta-D-glucoside contacts are provided by residues Gln110, His214, and 259–260 (NE). Glu260 serves as the catalytic Proton donor. Cys279 and Cys285 are disulfide-bonded. A beta-D-glucoside is bound by residues Tyr401, Glu472, Trp518, 525–526 (EW), and Phe534. Glu472 serves as the catalytic Nucleophile.

Belongs to the glycosyl hydrolase 1 family. In terms of assembly, heterodimer. The N-terminus of the larger subunit is blocked and the smaller subunit might be derived from the larger one.

It localises to the plastid. Its subcellular location is the chloroplast. The catalysed reaction is protodioscin + H2O = 26-deglucoprotodioscin + D-glucose. Its activity is regulated as follows. Partially inhibited by glucono-1,5-lactone, conduritol beta-epoxide and diosgenin, but not by beta-sitosterol or cholesterol. Beta-glucosidase involved in saponin metabolism. Highly specific for the cleavage of C-26-bound glucose moiety of furostanol glycosides such as protogracillin and protodioscin. No activity with nuatigenin glycoside. Convers furostanol glycosides to spirostanol glycosides. The protein is Furostanol glycoside 26-O-beta-glucosidase of Hellenia speciosa (Crepe ginger).